Reading from the N-terminus, the 330-residue chain is Protein TIFY 11f (330 aa).

The region spanning 61–97 is the Tify 1 domain; that stretch reads EAAAAAQLKIMYGGRMLVFDDFFPAGGAVVELVRAAA. The short motif at 124–142 is the Jas element; it reads PVVRKVSLQRFVEKRRRMR. Residues 126 to 133 carry the Nuclear localization signal motif; it reads VRKVSLQR. A Tify 2 domain is found at 228–264; the sequence is EAAAAAQLKIMYGGRMLVFDDFFPAGGAVVELVRAAA. A disordered region spans residues 267–330; the sequence is GRDDDGARAR…SGRTDDAAFY (64 aa).

The protein belongs to the TIFY/JAZ family. Ubiquitinated. Targeted for degradation by the SCF(COI1) E3 ubiquitin ligase-proteasome pathway during jasmonate signaling.

Its subcellular location is the nucleus. Functionally, repressor of jasmonate responses. In Oryza sativa subsp. japonica (Rice), this protein is Protein TIFY 11f.